Reading from the N-terminus, the 662-residue chain is Eukaryotic peptide chain release factor GTP-binding subunit (662 aa).

The disordered stretch occupies residues 1 to 220 (MASNQPNNGE…PATVTEDATD (220 aa)). Low complexity predominate over residues 26–40 (AKAPTFTPKAAPFIP). A compositionally biased stretch (polar residues) spans 62 to 89 (YTGQGQNSNSPHPTKSYQQYYQKPTGNT). The segment covering 91–102 (DEDKSRVPDFSK) has biased composition (basic and acidic residues). The segment covering 122-134 (GGNTSAPKSTKPI) has biased composition (polar residues). The segment covering 141 to 158 (TKAPTTTKPAAPAAQSKT) has biased composition (low complexity). At T182 the chain carries Phosphothreonine. Residues 192–213 (AKTPSAPAAALKKAAEAAEPAT) are compositionally biased toward low complexity. One can recognise a tr-type G domain in the interval 236–464 (KEHVNIVFIG…LDSMTHLERK (229 aa)). The interval 245–252 (GHVDAGKS) is G1. GTP is bound at residue 245-252 (GHVDAGKS). The G2 stretch occupies residues 301–305 (GKTVE). Residues 322–325 (DAPG) form a G3 region. GTP contacts are provided by residues 384–387 (NKMD) and 428–429 (AY). The G4 stretch occupies residues 384 to 387 (NKMD). Positions 427-429 (SAY) are G5. Phosphoserine is present on S539.

Belongs to the TRAFAC class translation factor GTPase superfamily. Classic translation factor GTPase family. ERF3 subfamily. As to quaternary structure, component of the eRF1-eRF3-GTP ternary complex, composed of sup45/eRF1, sup35/eRF3 and GTP.

The protein localises to the cytoplasm. The catalysed reaction is GTP + H2O = GDP + phosphate + H(+). In terms of biological role, GTPase component of the eRF1-eRF3-GTP ternary complex, a ternary complex that mediates translation termination in response to the termination codons. Sup35/eRF3 mediates sup45/ERF1 delivery to stop codons: The eRF1-eRF3-GTP complex binds to a stop codon in the ribosomal A-site. GTP hydrolysis by sup35/eRF3 induces a conformational change that leads to its dissociation, permitting sup45/eRF1 to accommodate fully in the A-site. This Schizosaccharomyces pombe (strain 972 / ATCC 24843) (Fission yeast) protein is Eukaryotic peptide chain release factor GTP-binding subunit (sup35).